The chain runs to 313 residues: tRNA dimethylallyltransferase (313 aa).

11-18 (GPTAAGKS) lines the ATP pocket. Residue 13–18 (TAAGKS) participates in substrate binding. 3 interaction with substrate tRNA regions span residues 36 to 39 (DSAT), 160 to 164 (QRIQR), and 244 to 249 (RCVGYR).

It belongs to the IPP transferase family. In terms of assembly, monomer. The cofactor is Mg(2+).

It carries out the reaction adenosine(37) in tRNA + dimethylallyl diphosphate = N(6)-dimethylallyladenosine(37) in tRNA + diphosphate. In terms of biological role, catalyzes the transfer of a dimethylallyl group onto the adenine at position 37 in tRNAs that read codons beginning with uridine, leading to the formation of N6-(dimethylallyl)adenosine (i(6)A). This is tRNA dimethylallyltransferase from Bordetella pertussis (strain Tohama I / ATCC BAA-589 / NCTC 13251).